A 90-amino-acid polypeptide reads, in one-letter code: uncharacterized protein (90 aa).

Positions 36 to 82 (DQEYSDAQMQLEDAVNALNKLWLSSNDQQREQLYRMRLQLQSLQNNM) form a coiled coil.

This is an uncharacterized protein from Bacillus subtilis (strain 168).